A 162-amino-acid polypeptide reads, in one-letter code: Peptide methionine sulfoxide reductase MsrA (162 aa).

Residue cysteine 16 is part of the active site.

The protein belongs to the MsrA Met sulfoxide reductase family.

It carries out the reaction L-methionyl-[protein] + [thioredoxin]-disulfide + H2O = L-methionyl-(S)-S-oxide-[protein] + [thioredoxin]-dithiol. It catalyses the reaction [thioredoxin]-disulfide + L-methionine + H2O = L-methionine (S)-S-oxide + [thioredoxin]-dithiol. In terms of biological role, has an important function as a repair enzyme for proteins that have been inactivated by oxidation. Catalyzes the reversible oxidation-reduction of methionine sulfoxide in proteins to methionine. The sequence is that of Peptide methionine sulfoxide reductase MsrA from Geobacter sulfurreducens (strain ATCC 51573 / DSM 12127 / PCA).